The chain runs to 190 residues: Shikimate kinase (190 aa).

26-31 (GSGKST) lines the ATP pocket. S30 is a binding site for Mg(2+). 3 residues coordinate substrate: D48, R72, and G94. R133 is a binding site for ATP. R152 is a binding site for substrate.

Belongs to the shikimate kinase family. Monomer. The cofactor is Mg(2+).

It localises to the cytoplasm. It carries out the reaction shikimate + ATP = 3-phosphoshikimate + ADP + H(+). It functions in the pathway metabolic intermediate biosynthesis; chorismate biosynthesis; chorismate from D-erythrose 4-phosphate and phosphoenolpyruvate: step 5/7. In terms of biological role, catalyzes the specific phosphorylation of the 3-hydroxyl group of shikimic acid using ATP as a cosubstrate. This chain is Shikimate kinase, found in Prochlorococcus marinus (strain SARG / CCMP1375 / SS120).